The sequence spans 31 residues: Protamine PTP4 (31 aa).

The interval 1-31 (MPRRRRASRRIRRRRRPRVSRRRRGGRRRRR) is disordered.

Testis.

It is found in the nucleus. It localises to the chromosome. Protamines substitute for histones in the chromatin of sperm during the haploid phase of spermatogenesis. They compact sperm DNA into a highly condensed, stable and inactive complex. This chain is Protamine PTP4, found in Oncorhynchus mykiss (Rainbow trout).